The chain runs to 430 residues: Phosphoglucosamine mutase (430 aa).

The active-site Phosphoserine intermediate is serine 93. Mg(2+) is bound by residues serine 93, aspartate 227, aspartate 229, and aspartate 231. Serine 93 is subject to Phosphoserine.

The protein belongs to the phosphohexose mutase family. The cofactor is Mg(2+). Activated by phosphorylation.

The catalysed reaction is alpha-D-glucosamine 1-phosphate = D-glucosamine 6-phosphate. In terms of biological role, catalyzes the conversion of glucosamine-6-phosphate to glucosamine-1-phosphate. This is Phosphoglucosamine mutase from Thermosipho africanus (strain TCF52B).